We begin with the raw amino-acid sequence, 533 residues long: MCGILALMLADPHQQACPEIYEGLYSLQHRGQDAAGIVTAGNKGRLYQCKGSGMVADVFSQHQLRQLVGSMGIGHLRYPTAGSCAHSEAQPFYVNSPYGLVLGHNGNLINGPELRRFLDTEAHRHVNTGSDSELLLNIFAYELQRLDKFRINENDIFEALRNVYDRVNGGYACVAMIAGLGVLGFRDPNGIRPLVIGERDTPEGKDYMLASESVVLTQFGYRTFRDIRPGECVFIRRSNREDILAGFRGPRLFSRQILPCLRFTPDIFEYVYFARPDSVIDGLSVYQSRLNMGEKLAHTIMKRFGPDYMEKIDAVIPVPDSARTSALALAQTAQLPYVEAFIKNRYIGRTFIMPGQQIRRKSVRRKLNVQPQEFFDKNVLIVDDSIVRGTTSREIVQMARESGAKNVYLASCAPMITHPHVYGIDLADCKDLIAYGKTEDEVAEAISADGVIYQTLEDLLDSCRTAELTEFEVGLFTGEYTTGASKEYLVHLEQMRIANNRARKHSFAEDEEREAPEDISLHNTHSDVTFDFV.

Cys-2 (nucleophile) is an active-site residue. A Glutamine amidotransferase type-2 domain is found at 2-238 (CGILALMLAD…PGECVFIRRS (237 aa)). Asp-383 and Asp-384 together coordinate Mg(2+). Phosphoserine is present on Ser-506.

It in the C-terminal section; belongs to the purine/pyrimidine phosphoribosyltransferase family. It depends on Mg(2+) as a cofactor.

It carries out the reaction 5-phospho-beta-D-ribosylamine + L-glutamate + diphosphate = 5-phospho-alpha-D-ribose 1-diphosphate + L-glutamine + H2O. It participates in purine metabolism; IMP biosynthesis via de novo pathway; N(1)-(5-phospho-D-ribosyl)glycinamide from 5-phospho-alpha-D-ribose 1-diphosphate: step 1/2. The sequence is that of Amidophosphoribosyltransferase (ade4) from Schizosaccharomyces pombe (strain 972 / ATCC 24843) (Fission yeast).